Consider the following 267-residue polypeptide: WUSCHEL-related homeobox 8 (267 aa).

The homeobox; WUS-type DNA-binding region spans 88–152 (TARQRWTPTP…NRRARSKRKQ (65 aa)). The segment at 148–195 (SKRKQAALPNNNAESEAEADEESPTDKKPKSDRPLHQNIAMRDHNSER) is disordered. Residues 171–195 (PTDKKPKSDRPLHQNIAMRDHNSER) show a composition bias toward basic and acidic residues.

It belongs to the WUS homeobox family.

Its subcellular location is the nucleus. Its function is as follows. Transcription factor which may be involved in developmental processes. This Oryza sativa subsp. japonica (Rice) protein is WUSCHEL-related homeobox 8 (WOX8).